The sequence spans 627 residues: tRNA uridine 5-carboxymethylaminomethyl modification enzyme MnmG (627 aa).

FAD is bound by residues 13-18 (GGGHAG), valine 125, and serine 180. 274–288 (GPRYCPSIEDKVVRF) is an NAD(+) binding site. Glutamine 371 serves as a coordination point for FAD.

This sequence belongs to the MnmG family. Homodimer. Heterotetramer of two MnmE and two MnmG subunits. Requires FAD as cofactor.

It is found in the cytoplasm. Functionally, NAD-binding protein involved in the addition of a carboxymethylaminomethyl (cmnm) group at the wobble position (U34) of certain tRNAs, forming tRNA-cmnm(5)s(2)U34. This Francisella tularensis subsp. tularensis (strain FSC 198) protein is tRNA uridine 5-carboxymethylaminomethyl modification enzyme MnmG.